The following is a 1370-amino-acid chain: DNA-directed RNA polymerase subunit beta (1370 aa).

The protein belongs to the RNA polymerase beta chain family. In terms of assembly, the RNAP catalytic core consists of 2 alpha, 1 beta, 1 beta' and 1 omega subunit. When a sigma factor is associated with the core the holoenzyme is formed, which can initiate transcription.

The enzyme catalyses RNA(n) + a ribonucleoside 5'-triphosphate = RNA(n+1) + diphosphate. Its function is as follows. DNA-dependent RNA polymerase catalyzes the transcription of DNA into RNA using the four ribonucleoside triphosphates as substrates. This is DNA-directed RNA polymerase subunit beta from Polaromonas naphthalenivorans (strain CJ2).